Reading from the N-terminus, the 98-residue chain is Acylphosphatase (98 aa).

The Acylphosphatase-like domain occupies 12–98 (TYYVRVRGVV…ERRFERFQQQ (87 aa)). Catalysis depends on residues Arg-27 and Asn-45.

Belongs to the acylphosphatase family.

The enzyme catalyses an acyl phosphate + H2O = a carboxylate + phosphate + H(+). The protein is Acylphosphatase (acyP) of Burkholderia lata (strain ATCC 17760 / DSM 23089 / LMG 22485 / NCIMB 9086 / R18194 / 383).